The sequence spans 419 residues: MHHLRALVGVGLAGLAAGVPLTDKISVKPRQAPGAQNVVYWGQNGGGTIENNDLAAYCQPNSGIDVLVLAFLYQFGNGGNIPSGTIGQSCYISTSGQGQNCEALTAAIHTCQSAGVKIVLSLGGATSSYSLQTQAQAEQIGQYLWDSYGNSGNKTVQRPFGSNFVNGFDFDIEVNGGSSQYYQYMIAKLRANFASDKSNTYLITGAPQCPIPEPNMGVIISNSVFDHLYVQFYNNNNYTVPCALGINGNAPFNYNNWTSFIADTPSAGAKIFIGVPASPLASTGTPSGAQYYAAPEQLAAIVGEYRSDAHFGGIMMWSAGFSDANVNDGCTYAQQAKSILVNGAPCPSSGPPSSTPATAPAPTATTMPSSTSVSSPTASPTGGTVPQWGQCGGEGYSGPTQCVPPYQCVKQGDWWSSCR.

The N-terminal stretch at 1 to 18 is a signal peptide; that stretch reads MHHLRALVGVGLAGLAAG. The GH18 domain occupies 35-343; it reads AQNVVYWGQN…QQAKSILVNG (309 aa). N-linked (GlcNAc...) asparagine glycosylation occurs at Asn153. Glu173 functions as the Proton donor in the catalytic mechanism. Residues Asn237 and Asn256 are each glycosylated (N-linked (GlcNAc...) asparagine). The interval 343 to 390 is disordered; that stretch reads GAPCPSSGPPSSTPATAPAPTATTMPSSTSVSSPTASPTGGTVPQWGQ. Over residues 355–384 the composition is skewed to low complexity; sequence TPATAPAPTATTMPSSTSVSSPTASPTGGT. Positions 383 to 419 constitute a CBM1 domain; the sequence is GTVPQWGQCGGEGYSGPTQCVPPYQCVKQGDWWSSCR.

This sequence belongs to the glycosyl hydrolase 18 family. Chitinase class III subfamily.

Its subcellular location is the secreted. The catalysed reaction is Random endo-hydrolysis of N-acetyl-beta-D-glucosaminide (1-&gt;4)-beta-linkages in chitin and chitodextrins.. Secreted chitinase involved in the degradation of chitin, a component of the cell walls of fungi and exoskeletal elements of some animals (including worms and arthropods). Participates in the infection process and directly acts in the penetration process of the host cuticle. The sequence is that of Endochitinase 2 (chi2) from Metarhizium anisopliae (Entomophthora anisopliae).